The sequence spans 621 residues: Ubiquitin carboxyl-terminal hydrolase MINDY-2 (621 aa).

2 disordered regions span residues 1-106 (MESS…RGQY) and 119-179 (VGHE…LESF). Serine 94 bears the Phosphoserine mark. Residues 145–163 (AAGSEEPSSAGGLSSSCSD) show a composition bias toward low complexity. The active-site Nucleophile is cysteine 266. The Proton acceptor role is filled by histidine 448. The interval 507-559 (GQQDQIDQDYLMALSLQQEQQSQEINWEQIPEGISDLELAKKLQEEEDRRASQ) is ubiquitin-binding domain (UBD). Residues 556–621 (RASQYYQEQE…EKEKNSCVIL (66 aa)) form a disordered region. The span at 558–591 (SQYYQEQEQAAAAAAAASTQAQQGQPAQASPSSG) shows a compositional bias: low complexity. The span at 597 to 621 (SERKRKEPREKDKEKEKEKNSCVIL) shows a compositional bias: basic and acidic residues.

The protein belongs to the MINDY deubiquitinase family. FAM63 subfamily.

It carries out the reaction Thiol-dependent hydrolysis of ester, thioester, amide, peptide and isopeptide bonds formed by the C-terminal Gly of ubiquitin (a 76-residue protein attached to proteins as an intracellular targeting signal).. Hydrolase that can remove 'Lys-48'-linked conjugated ubiquitin from proteins. Binds to polyubiquitin chains of different linkage types, including 'Lys-6', 'Lys-11', 'Lys-29', 'Lys-33', 'Lys-48' and 'Lys-63'. May play a regulatory role at the level of protein turnover. The protein is Ubiquitin carboxyl-terminal hydrolase MINDY-2 of Homo sapiens (Human).